The sequence spans 694 residues: Katanin p80 WD40 repeat-containing subunit B1 (694 aa).

WD repeat units lie at residues 18–58, 61–100, 103–142, 145–186, 188–226, and 229–269; these read AHSS…CIMS, GHTS…ILRT, GHKA…CVFR, GHTQ…TEFT, HTSA…MIGS, and GETG…DVVH. 2 disordered regions span residues 319 to 410 and 470 to 492; these read KPIP…PFPA and TTSA…STGI. Polar residues predominate over residues 327 to 349; the sequence is ALGTTLRRNYERPTTSCTGQEMK. Basic and acidic residues predominate over residues 350-378; it reads QSSEADRRSPEGERRSPSSEDEKEDKESS. The span at 470-481 shows a compositional bias: low complexity; it reads TTSASSPSRPVV. The span at 482 to 492 shows a compositional bias: polar residues; sequence NTTKPKPSTGI.

The protein belongs to the WD repeat KATNB1 family. In terms of assembly, interacts with katna1. This interaction enhances the microtubule binding and severing activity of katna1 and also targets this activity to the centrosome.

Its subcellular location is the cytoplasm. It localises to the cytoskeleton. The protein resides in the microtubule organizing center. The protein localises to the centrosome. It is found in the spindle pole. Its subcellular location is the spindle. In terms of biological role, participates in a complex which severs microtubules in an ATP-dependent manner. May act to target the enzymatic subunit of this complex to sites of action such as the centrosome. Microtubule severing may promote rapid reorganization of cellular microtubule arrays and the release of microtubules from the centrosome following nucleation. The polypeptide is Katanin p80 WD40 repeat-containing subunit B1 (katnb1) (Danio rerio (Zebrafish)).